The sequence spans 185 residues: MLTLASKLKREEGVRAGRTPAGSNDAAHRVSIRDRLLIKEVAELEANLPSTCKVTFPDENKLCHFQLAISPDEGYYLGGKFQFEIEVPEAYNMVPPKVKCLTRIWHPNIAETGEICLSLLREHSIDGTGWAPTRTLKDVVWGLNSLFTDLLNFDDPLNIDAAEHHLRDKEDFRNKVQDFIKNYAR.

Residues 1 to 29 (MLTLASKLKREEGVRAGRTPAGSNDAAHR) are interaction with uba3. Residues 32 to 185 (IRDRLLIKEV…VQDFIKNYAR (154 aa)) enclose the UBC core domain. Cys116 serves as the catalytic Glycyl thioester intermediate.

It belongs to the ubiquitin-conjugating enzyme family. UBE2F subfamily.

It catalyses the reaction [E1 NEDD8-activating enzyme]-S-[NEDD8 protein]-yl-L-cysteine + [E2 NEDD8-conjugating enzyme]-L-cysteine = [E1 NEDD8-activating enzyme]-L-cysteine + [E2 NEDD8-conjugating enzyme]-S-[NEDD8-protein]-yl-L-cysteine.. It participates in protein modification; protein neddylation. In terms of biological role, accepts the ubiquitin-like protein NEDD8 from the UBA3-NAE1 E1 complex and catalyzes its covalent attachment to other proteins. Together with the E3 ubiquitin ligase rnf7/rbx2, specifically neddylates cullin-5 (cul5). Does not neddylate cul1, cul2, cul3, cul4a or cul4b. This Danio rerio (Zebrafish) protein is NEDD8-conjugating enzyme UBE2F (ube2f).